The sequence spans 162 residues: CASP-like protein 1C2 (162 aa).

Topologically, residues 1 to 6 (MMKPKR) are cytoplasmic. Residues 7 to 27 (LLSLLLRLIAVGATLAAVIIM) form a helical membrane-spanning segment. Residues 28 to 49 (ATSHEKGTFFAVSYEAKYTDTP) are Extracellular-facing. The helical transmembrane segment at 50–70 (AFKYFVIANAIVTVYGFLVLF) threads the bilayer. Topologically, residues 71-79 (HPPGSPLWR) are cytoplasmic. A helical membrane pass occupies residues 80 to 100 (LVLALDLVFTMLLISSISAAL). The Extracellular portion of the chain corresponds to 101-130 (AVAQVGKNGNSRAGWLPVCGQVTKYCNQVT). A helical membrane pass occupies residues 131–151 (GALVAGLIALITYIILLLHSI). The Cytoplasmic segment spans residues 152–162 (YTFLNPLLEKA).

Belongs to the Casparian strip membrane proteins (CASP) family. As to quaternary structure, homodimer and heterodimers.

The protein resides in the cell membrane. The protein is CASP-like protein 1C2 of Populus trichocarpa (Western balsam poplar).